The sequence spans 131 residues: Profilin (131 aa).

It belongs to the profilin family. In terms of assembly, occurs in many kinds of cells as a complex with monomeric actin in a 1:1 ratio.

It localises to the cytoplasm. The protein resides in the cytoskeleton. Functionally, binds to actin and affects the structure of the cytoskeleton. At high concentrations, profilin prevents the polymerization of actin, whereas it enhances it at low concentrations. By binding to PIP2, it inhibits the formation of IP3 and DG. The sequence is that of Profilin from Capsicum annuum (Capsicum pepper).